Here is a 1393-residue protein sequence, read N- to C-terminus: DNA-directed RNA polymerase subunit beta' (1393 aa).

4 residues coordinate Zn(2+): C70, C72, C85, and C88. Residues D461, D463, and D465 each coordinate Mg(2+). Zn(2+) is bound by residues C804, C877, C884, and C887.

This sequence belongs to the RNA polymerase beta' chain family. As to quaternary structure, the RNAP catalytic core consists of 2 alpha, 1 beta, 1 beta' and 1 omega subunit. When a sigma factor is associated with the core the holoenzyme is formed, which can initiate transcription. Mg(2+) serves as cofactor. Requires Zn(2+) as cofactor.

The enzyme catalyses RNA(n) + a ribonucleoside 5'-triphosphate = RNA(n+1) + diphosphate. In terms of biological role, DNA-dependent RNA polymerase catalyzes the transcription of DNA into RNA using the four ribonucleoside triphosphates as substrates. This Rhodospirillum rubrum (strain ATCC 11170 / ATH 1.1.1 / DSM 467 / LMG 4362 / NCIMB 8255 / S1) protein is DNA-directed RNA polymerase subunit beta'.